We begin with the raw amino-acid sequence, 1021 residues long: Outer capsid protein P3 (1021 aa).

This sequence belongs to the phytoreovirus inner capsid protein P3 family. Homodimer. Homomultimer.

It localises to the virion. The protein localises to the host cytoplasm. In terms of biological role, capsid protein which self-assembles to form the inner icosahedral capsid with a T=2 symmetry, and consisting of 60 P3 dimers. The protein is Outer capsid protein P3 of Nephotettix cincticeps (Green rice leafhopper).